The sequence spans 356 residues: Caspase activity and apoptosis inhibitor 1 (356 aa).

Residues 1 to 14 (MTGKKSSREKRRKR) are compositionally biased toward basic residues. Disordered regions lie at residues 1–24 (MTGK…ASLA) and 54–80 (VAGG…GSLQ). Ser-68 carries the post-translational modification Phosphoserine. Residue Thr-69 is modified to Phosphothreonine. A Glycyl lysine isopeptide (Lys-Gly) (interchain with G-Cter in SUMO2) cross-link involves residue Lys-84. Phosphoserine is present on residues Ser-100 and Ser-183. The segment at 208 to 234 (DSTSSLRENKQPEVLESKQGKGEDSDV) is disordered. Basic and acidic residues predominate over residues 214 to 231 (RENKQPEVLESKQGKGED). Residues 276–306 (ENTVQSEAGQIDDLERDIEKSVNEILGLAES) adopt a coiled-coil conformation. Ser-307 is modified (phosphoserine).

Its function is as follows. Anti-apoptotic protein that modulates a caspase-10 dependent mitochondrial caspase-3/9 feedback amplification loop. The sequence is that of Caspase activity and apoptosis inhibitor 1 (Caap1) from Mus musculus (Mouse).